The primary structure comprises 452 residues: Ribosomal protein uS12 methylthiotransferase RimO (452 aa).

The MTTase N-terminal domain occupies 3 to 122; that stretch reads LTVGLISLGC…LPEIITQVMD (120 aa). [4Fe-4S] cluster-binding residues include Cys-12, Cys-48, Cys-85, Cys-162, Cys-166, and Cys-169. Positions 148–392 constitute a Radical SAM core domain; it reads LTPPHTAYIK…TLLLARLASE (245 aa). One can recognise a TRAM domain in the interval 395 to 452; sequence QEQIGRQIRVLVDAPGVARTEWDAPDIDGTVSVPLTLPVGQFATVTVTDAVAYELTAE.

The protein belongs to the methylthiotransferase family. RimO subfamily. Requires [4Fe-4S] cluster as cofactor.

The protein localises to the cytoplasm. It catalyses the reaction L-aspartate(89)-[ribosomal protein uS12]-hydrogen + (sulfur carrier)-SH + AH2 + 2 S-adenosyl-L-methionine = 3-methylsulfanyl-L-aspartate(89)-[ribosomal protein uS12]-hydrogen + (sulfur carrier)-H + 5'-deoxyadenosine + L-methionine + A + S-adenosyl-L-homocysteine + 2 H(+). In terms of biological role, catalyzes the methylthiolation of an aspartic acid residue of ribosomal protein uS12. The protein is Ribosomal protein uS12 methylthiotransferase RimO of Akkermansia muciniphila (strain ATCC BAA-835 / DSM 22959 / JCM 33894 / BCRC 81048 / CCUG 64013 / CIP 107961 / Muc).